The primary structure comprises 283 residues: 4-diphosphocytidyl-2-C-methyl-D-erythritol kinase (283 aa).

The active site involves lysine 10. 99-109 (PMGGGLGGGSS) serves as a coordination point for ATP. Aspartate 141 is an active-site residue.

The protein belongs to the GHMP kinase family. IspE subfamily. Homodimer.

It carries out the reaction 4-CDP-2-C-methyl-D-erythritol + ATP = 4-CDP-2-C-methyl-D-erythritol 2-phosphate + ADP + H(+). It participates in isoprenoid biosynthesis; isopentenyl diphosphate biosynthesis via DXP pathway; isopentenyl diphosphate from 1-deoxy-D-xylulose 5-phosphate: step 3/6. Catalyzes the phosphorylation of the position 2 hydroxy group of 4-diphosphocytidyl-2C-methyl-D-erythritol. The protein is 4-diphosphocytidyl-2-C-methyl-D-erythritol kinase of Salmonella enteritidis PT4 (strain P125109).